The primary structure comprises 474 residues: tRNA-2-methylthio-N(6)-dimethylallyladenosine synthase (474 aa).

One can recognise an MTTase N-terminal domain in the interval lysine 3–glycine 120. The [4Fe-4S] cluster site is built by cysteine 12, cysteine 49, cysteine 83, cysteine 157, cysteine 161, and cysteine 164. A Radical SAM core domain is found at arginine 143–alanine 375. The 64-residue stretch at arginine 378–arginine 441 folds into the TRAM domain.

This sequence belongs to the methylthiotransferase family. MiaB subfamily. Monomer. It depends on [4Fe-4S] cluster as a cofactor.

The protein resides in the cytoplasm. It catalyses the reaction N(6)-dimethylallyladenosine(37) in tRNA + (sulfur carrier)-SH + AH2 + 2 S-adenosyl-L-methionine = 2-methylsulfanyl-N(6)-dimethylallyladenosine(37) in tRNA + (sulfur carrier)-H + 5'-deoxyadenosine + L-methionine + A + S-adenosyl-L-homocysteine + 2 H(+). Its function is as follows. Catalyzes the methylthiolation of N6-(dimethylallyl)adenosine (i(6)A), leading to the formation of 2-methylthio-N6-(dimethylallyl)adenosine (ms(2)i(6)A) at position 37 in tRNAs that read codons beginning with uridine. The sequence is that of tRNA-2-methylthio-N(6)-dimethylallyladenosine synthase from Salmonella paratyphi A (strain ATCC 9150 / SARB42).